Here is a 269-residue protein sequence, read N- to C-terminus: Hdr-like menaquinol oxidoreductase iron-sulfur subunit 1 (269 aa).

The tat-type signal signal peptide spans 1 to 26 (MMSRRKFLLLTGAAAAGAILTPQISA). Residues cysteine 52, cysteine 55, cysteine 72, cysteine 76, cysteine 118, cysteine 121, cysteine 126, cysteine 130, cysteine 150, cysteine 153, cysteine 156, cysteine 160, cysteine 194, cysteine 197, cysteine 215, and cysteine 219 each contribute to the [4Fe-4S] cluster site. The 4Fe-4S ferredoxin-type domain maps to 141–170 (GIVEIDMHRCIGCRYCMIACPYGARCFNFI).

In terms of assembly, consists of five subunits: an integral membrane subunit, a cytochrome b-like subunit, a cytochrome c subunit and two iron-sulfur subunits. The cofactor is [4Fe-4S] cluster. In terms of processing, predicted to be exported by the Tat system. The position of the signal peptide cleavage has been experimentally proven.

The protein resides in the cell membrane. In terms of biological role, has menaquinol-oxidizing activity. HmeA, HmeB and HmeE subunits may together catalyze electron transfer from menaquinol to cytochrome c. This chain is Hdr-like menaquinol oxidoreductase iron-sulfur subunit 1 (hmeA), found in Archaeoglobus fulgidus (strain ATCC 49558 / DSM 4304 / JCM 9628 / NBRC 100126 / VC-16).